The following is a 346-amino-acid chain: Holliday junction branch migration complex subunit RuvB (346 aa).

The large ATPase domain (RuvB-L) stretch occupies residues 1–182 (MSEPARLISP…FGIPVRLSFY (182 aa)). Residues Leu21, Arg22, Gly63, Lys66, Thr67, Thr68, 129-131 (EDF), Arg172, Tyr182, and Arg219 contribute to the ATP site. Residue Thr67 coordinates Mg(2+). The small ATPAse domain (RuvB-S) stretch occupies residues 183–253 (TVEELELIVR…IADEALTRLL (71 aa)). A head domain (RuvB-H) region spans residues 256 to 346 (NVGFDQLDKR…AQFRLFQEDN (91 aa)). The DNA site is built by Arg292, Arg311, and Arg316.

This sequence belongs to the RuvB family. Homohexamer. Forms an RuvA(8)-RuvB(12)-Holliday junction (HJ) complex. HJ DNA is sandwiched between 2 RuvA tetramers; dsDNA enters through RuvA and exits via RuvB. An RuvB hexamer assembles on each DNA strand where it exits the tetramer. Each RuvB hexamer is contacted by two RuvA subunits (via domain III) on 2 adjacent RuvB subunits; this complex drives branch migration. In the full resolvosome a probable DNA-RuvA(4)-RuvB(12)-RuvC(2) complex forms which resolves the HJ.

The protein localises to the cytoplasm. It catalyses the reaction ATP + H2O = ADP + phosphate + H(+). The RuvA-RuvB-RuvC complex processes Holliday junction (HJ) DNA during genetic recombination and DNA repair, while the RuvA-RuvB complex plays an important role in the rescue of blocked DNA replication forks via replication fork reversal (RFR). RuvA specifically binds to HJ cruciform DNA, conferring on it an open structure. The RuvB hexamer acts as an ATP-dependent pump, pulling dsDNA into and through the RuvAB complex. RuvB forms 2 homohexamers on either side of HJ DNA bound by 1 or 2 RuvA tetramers; 4 subunits per hexamer contact DNA at a time. Coordinated motions by a converter formed by DNA-disengaged RuvB subunits stimulates ATP hydrolysis and nucleotide exchange. Immobilization of the converter enables RuvB to convert the ATP-contained energy into a lever motion, pulling 2 nucleotides of DNA out of the RuvA tetramer per ATP hydrolyzed, thus driving DNA branch migration. The RuvB motors rotate together with the DNA substrate, which together with the progressing nucleotide cycle form the mechanistic basis for DNA recombination by continuous HJ branch migration. Branch migration allows RuvC to scan DNA until it finds its consensus sequence, where it cleaves and resolves cruciform DNA. The protein is Holliday junction branch migration complex subunit RuvB of Rhizobium johnstonii (strain DSM 114642 / LMG 32736 / 3841) (Rhizobium leguminosarum bv. viciae).